Here is a 648-residue protein sequence, read N- to C-terminus: Calpain-5 (648 aa).

Positions 28 to 353 (PFVDTLFPPT…FTDISLCQLF (326 aa)) constitute a Calpain catalytic domain. Residues cysteine 83, histidine 252, and asparagine 290 contribute to the active site. The segment at 354–509 (NTSVFSFSRS…VYSDEHIHFS (156 aa)) is domain III. Residues 502-625 (SDEHIHFSPL…ENRDTTLQLT (124 aa)) enclose the C2 domain.

Belongs to the peptidase C2 family. Ca(2+) is required as a cofactor. In terms of tissue distribution, expressed in neuronal, but not in GABA-ergic neurons, intestinal, hypodermal and excretory tissues.

In terms of biological role, required for the correct female sexual development of the soma and germline in hermaphrodite animals, while being fully dispensable in males. Has calcium-dependent proteolytic activity and is involved in the cleavage of tra-2, for which it acts as a potentiator. Capable of calcium-dependent autolysis. Part of the necrosis cell death pathway. Required for necrosis of intestinal cells induced by B.thuringiensis endotoxin Cry6Aa. This chain is Calpain-5, found in Caenorhabditis elegans.